We begin with the raw amino-acid sequence, 238 residues long: N-terminal acetyltransferase A complex catalytic subunit ARD1 (238 aa).

One can recognise an N-acetyltransferase domain in the interval 35 to 195 (YHILSWPEAS…DAYAMKKVLK (161 aa)).

It belongs to the acetyltransferase family. ARD1 subfamily. As to quaternary structure, component of the N-terminal acetyltransferase A (NatA) complex, which is composed of ARD1, NAT1 and NAT5. Can self-associate.

Its subcellular location is the cytoplasm. It catalyses the reaction N-terminal glycyl-[protein] + acetyl-CoA = N-terminal N(alpha)-acetylglycyl-[protein] + CoA + H(+). The catalysed reaction is N-terminal L-alanyl-[protein] + acetyl-CoA = N-terminal N(alpha)-acetyl-L-alanyl-[protein] + CoA + H(+). The enzyme catalyses N-terminal L-seryl-[protein] + acetyl-CoA = N-terminal N(alpha)-acetyl-L-seryl-[protein] + CoA + H(+). It carries out the reaction N-terminal L-valyl-[protein] + acetyl-CoA = N-terminal N(alpha)-acetyl-L-valyl-[protein] + CoA + H(+). It catalyses the reaction N-terminal L-cysteinyl-[protein] + acetyl-CoA = N-terminal N(alpha)-acetyl-L-cysteinyl-[protein] + CoA + H(+). The catalysed reaction is N-terminal L-threonyl-[protein] + acetyl-CoA = N-terminal N(alpha)-acetyl-L-threonyl-[protein] + CoA + H(+). Functionally, catalytic component of the NatA N-terminal acetyltransferase, which catalyzes acetylation of proteins beginning with Met-Ser, Met-Gly and Met-Ala. N-acetylation plays a role in normal eukaryotic translation and processing, protect against proteolytic degradation and protein turnover. This chain is N-terminal acetyltransferase A complex catalytic subunit ARD1 (ARD1), found in Saccharomyces cerevisiae (strain ATCC 204508 / S288c) (Baker's yeast).